The chain runs to 538 residues: Syncytin-2 (538 aa).

An N-terminal signal peptide occupies residues 1–15; it reads MGLLLLVLILTPLLA. At 16 to 478 the chain is on the extracellular side; sequence AHRHPDFPLL…GWLNWEGTWK (463 aa). The short motif at 43–46 is the CXXC element; that stretch reads CWLC. 3 disulfide bridges follow: cysteine 43/cysteine 46, cysteine 43/cysteine 439, and cysteine 431/cysteine 438. 8 N-linked (GlcNAc...) asparagine glycosylation sites follow: asparagine 133, asparagine 146, asparagine 177, asparagine 220, asparagine 241, asparagine 247, asparagine 312, and asparagine 332. The interval 354-374 is fusion peptide; that stretch reads FIPLLAGLGIIAGTGTGIAGI. Residues 414–430 carry the CKS-17 motif; the sequence is LQNRRGLDMLTAAQGGI. The short motif at 431 to 439 is the CX6CC element; sequence CLALDEKCC. The N-linked (GlcNAc...) asparagine glycan is linked to asparagine 443. The helical transmembrane segment at 479 to 499 threads the bilayer; that stretch reads WFSWVLPFTGPLVSLLLLLLF. The Cytoplasmic segment spans residues 500-538; the sequence is GPCLLNLITQFVLSRLQAIKLQTNLSAGCRPHNIQESPF.

This sequence belongs to the gamma type-C retroviral envelope protein family. HERV class-I FRD env subfamily. In terms of assembly, the surface and transmembrane proteins form a heterodimer. They are attached by non-covalent interactions or by a labile interchain disulfide bond. In terms of processing, specific enzymatic cleavages in vivo yield the mature SU and TM proteins. Post-translationally, the CXXC motif is highly conserved across a broad range of retroviral envelope proteins. It is thought to participate in the formation of a labile disulfide bond possibly with the CX6CC motif present in the transmembrane protein.

It is found in the virion. The protein resides in the cell membrane. Functionally, this endogenous retroviral envelope protein has retained its original fusogenic properties and participates in trophoblast fusion and the formation of a syncytium during placenta morphogenesis. The interaction with MFSD2A is apparently important for this process. Endogenous envelope proteins may have kept, lost or modified their original function during evolution but this one can still make pseudotypes with MLV, HIV-1 or SIV-1 virions and confer infectivity. Retroviral envelope proteins mediate receptor recognition and membrane fusion during early infection. The surface protein mediates receptor recognition, while the transmembrane protein anchors the envelope heterodimer to the viral membrane through one transmembrane domain. The other hydrophobic domain, called fusion peptide, mediates fusion of the viral membrane with the target cell membrane. The protein is Syncytin-2 (ERVFRD-1) of Pongo pygmaeus (Bornean orangutan).